Here is a 79-residue protein sequence, read N- to C-terminus: Large ribosomal subunit protein uL24 (79 aa).

The interval 1-29 (MPKLKKLLLKVSTSKPNTNPPSQNEEKGT) is disordered. Residues 11–23 (VSTSKPNTNPPSQ) show a composition bias toward polar residues.

It belongs to the universal ribosomal protein uL24 family. As to quaternary structure, part of the 50S ribosomal subunit.

Functionally, one of two assembly initiator proteins, it binds directly to the 5'-end of the 23S rRNA, where it nucleates assembly of the 50S subunit. One of the proteins that surrounds the polypeptide exit tunnel on the outside of the subunit. The sequence is that of Large ribosomal subunit protein uL24 (rplX) from Onion yellows phytoplasma (strain OY-M).